We begin with the raw amino-acid sequence, 676 residues long: RNA helicase NPH-II (676 aa).

Residues 172–347 enclose the Helicase ATP-binding domain; sequence FSAWISHRPV…VFLPNPAFIH (176 aa). 185–192 contacts ATP; it reads GGTGVGKT. Residues 296 to 299 carry the DEXH box motif; the sequence is DEVH. Residues 366 to 542 enclose the Helicase C-terminal domain; sequence NPSSRMAYIE…KFNLTLPEDL (177 aa).

Belongs to the DEAD box helicase family. DEAH subfamily. In terms of assembly, monomer.

Its subcellular location is the virion. The catalysed reaction is ATP + H2O = ADP + phosphate + H(+). NTP-dependent helicase that catalyzes unidirectional unwinding of 3'tailed duplex RNAs and plays an important role during transcription of early mRNAs, presumably by preventing R-loop formation behind the elongating RNA polymerase. Might also play a role in the export of newly synthesized mRNA chains out of the core into the cytoplasm. Required for replication and propagation of viral particles. The sequence is that of RNA helicase NPH-II (OPG084) from Homo sapiens (Human).